A 312-amino-acid polypeptide reads, in one-letter code: MTDKIVVAALYKFVSLPDYQALREPLLQTLLDNGIKGTLLLAEEGINGTVSGSRAAIDALLAWFRQDARLADIDHKESYCDEQPFYRTKVKLKKEIVTLGVPGVDPNQRVGTYVEPQDWNALISDPEVLLIDTRNDYEVAIGTFEGAIDPKTKSFREFPEYVKAHFDPSKHKKVAMFCTGGIRCEKASSYMLGEGFEEVYHLKGGILKYLEEVPQEQTKWRGDCFVFDNRVTVRHDLSEGDYDQCHACRNPISVEDRQSEYYSPGVSCPHCWDSLPEKTRESARERQKQIELARARNQPHPIGRDPRQLNEA.

Residues 124 to 218 (SDPEVLLIDT…YLEEVPQEQT (95 aa)) enclose the Rhodanese domain. The active-site Cysteine persulfide intermediate is Cys178. 2 stretches are compositionally biased toward basic and acidic residues: residues 279–294 (TRESARERQKQIELAR) and 302–312 (IGRDPRQLNEA). A disordered region spans residues 279 to 312 (TRESARERQKQIELARARNQPHPIGRDPRQLNEA).

This sequence belongs to the TrhO family.

The enzyme catalyses uridine(34) in tRNA + AH2 + O2 = 5-hydroxyuridine(34) in tRNA + A + H2O. Catalyzes oxygen-dependent 5-hydroxyuridine (ho5U) modification at position 34 in tRNAs. This Ectopseudomonas mendocina (strain ymp) (Pseudomonas mendocina) protein is tRNA uridine(34) hydroxylase.